The primary structure comprises 97 residues: Defective intron-associated endonuclease 3 (97 aa).

Functionally, this endonuclease is specific to the nrdB gene splice junction and is involved in intron homing. The sequence is that of Defective intron-associated endonuclease 3 (ITEVIIIR) from Escherichia coli (Bacteriophage T4).